Reading from the N-terminus, the 203-residue chain is Thymidylate kinase (203 aa).

ATP is bound at residue 14 to 21 (GMDGIGKS).

The protein belongs to the thymidylate kinase family.

It catalyses the reaction dTMP + ATP = dTDP + ADP. Its function is as follows. Phosphorylation of dTMP to form dTDP in both de novo and salvage pathways of dTTP synthesis. The polypeptide is Thymidylate kinase (Rickettsia typhi (strain ATCC VR-144 / Wilmington)).